A 240-amino-acid polypeptide reads, in one-letter code: Protein OPG176 (240 aa).

This sequence belongs to the orthopoxvirus OPG176 family. As to quaternary structure, tetramer. Interacts with host MYD88, TRF4, TICAM2 and MAL.

In terms of biological role, BCL2-like protein which disrupts the host immune response by inhibiting the TLR4 signaling pathway leading to NF-kappa-B activation. Acts close to the plasma membrane and targets several host TIR-domain containing adapter proteins including MYD88, TIRAP, TRIF and TICAM2. In turn, blocks the host NF-kappa-B and TRIF-mediated IRF3 activation. This is Protein OPG176 (OPG176) from Bos taurus (Bovine).